Here is a 260-residue protein sequence, read N- to C-terminus: Small ribosomal subunit protein uS3 (260 aa).

Residues 39–114 (LRQYIEQKLG…QIRINVVEVQ (76 aa)) enclose the KH type-2 domain. The tract at residues 218-260 (QEVATPPPSPRDRDRDRGDRDREPRRRQQQRRRQQFEDRSNEG) is disordered. 2 stretches are compositionally biased toward basic and acidic residues: residues 227-243 (PRDRDRDRGDRDREPRR) and 251-260 (QQFEDRSNEG).

This sequence belongs to the universal ribosomal protein uS3 family. As to quaternary structure, part of the 30S ribosomal subunit. Forms a tight complex with proteins S10 and S14.

Functionally, binds the lower part of the 30S subunit head. Binds mRNA in the 70S ribosome, positioning it for translation. The chain is Small ribosomal subunit protein uS3 from Nostoc sp. (strain PCC 7120 / SAG 25.82 / UTEX 2576).